The chain runs to 201 residues: Small ribosomal subunit protein uS4c (201 aa).

The segment at 20-43 is disordered; that stretch reads GLTSKRPRAGSDLRNQSRSGKRSQ. The region spanning 89-149 is the S4 RNA-binding domain; it reads MRLDNILFRL…DEQKSRALIQ (61 aa).

This sequence belongs to the universal ribosomal protein uS4 family. Part of the 30S ribosomal subunit. Contacts protein S5. The interaction surface between S4 and S5 is involved in control of translational fidelity.

It is found in the plastid. Its subcellular location is the chloroplast. Its function is as follows. One of the primary rRNA binding proteins, it binds directly to 16S rRNA where it nucleates assembly of the body of the 30S subunit. Functionally, with S5 and S12 plays an important role in translational accuracy. This chain is Small ribosomal subunit protein uS4c (rps4), found in Buxus microphylla (Littleleaf boxwood).